The primary structure comprises 476 residues: Growth arrest-specific protein 7 (476 aa).

Residues 1 to 62 (MSGARCRTLY…PASYVQLLEK (62 aa)) enclose the SH3 domain. A WW domain is found at 77-110 (VILPPGWQSYLSPQGRRYYVNTTTNETTWERPSS). The disordered stretch occupies residues 100 to 171 (TNETTWERPS…SSPSKKQSKE (72 aa)). The segment covering 108–120 (PSSSPGIPASPGS) has biased composition (low complexity). 2 positions are modified to phosphoserine: serine 117 and serine 163. The span at 150–171 (RKSTGDSQNLGSSSPSKKQSKE) shows a compositional bias: polar residues. The 261-residue stretch at 196–456 (TEWSYCDYFW…LLRKVDPAKD (261 aa)) folds into the F-BAR domain. Residues 309-419 (ENFKKDMKKC…RLEVERVEMI (111 aa)) are a coiled coil.

The protein localises to the cytoplasm. Its function is as follows. May play a role in promoting maturation and morphological differentiation of cerebellar neurons. This Homo sapiens (Human) protein is Growth arrest-specific protein 7 (GAS7).